We begin with the raw amino-acid sequence, 435 residues long: Methylenetetrahydrofolate--tRNA-(uracil-5-)-methyltransferase TrmFO (435 aa).

7–12 (GAGLAG) is a binding site for FAD.

Belongs to the MnmG family. TrmFO subfamily. The cofactor is FAD.

The protein resides in the cytoplasm. It catalyses the reaction uridine(54) in tRNA + (6R)-5,10-methylene-5,6,7,8-tetrahydrofolate + NADH + H(+) = 5-methyluridine(54) in tRNA + (6S)-5,6,7,8-tetrahydrofolate + NAD(+). The catalysed reaction is uridine(54) in tRNA + (6R)-5,10-methylene-5,6,7,8-tetrahydrofolate + NADPH + H(+) = 5-methyluridine(54) in tRNA + (6S)-5,6,7,8-tetrahydrofolate + NADP(+). Its function is as follows. Catalyzes the folate-dependent formation of 5-methyl-uridine at position 54 (M-5-U54) in all tRNAs. The protein is Methylenetetrahydrofolate--tRNA-(uracil-5-)-methyltransferase TrmFO of Thermotoga sp. (strain RQ2).